A 102-amino-acid chain; its full sequence is NADH-quinone oxidoreductase subunit K (102 aa).

3 helical membrane-spanning segments follow: residues 5 to 25 (ITHY…GIFL), 31 to 51 (IIIL…FVAF), and 66 to 86 (FVLT…VVFF).

The protein belongs to the complex I subunit 4L family. In terms of assembly, NDH-1 is composed of 14 different subunits. Subunits NuoA, H, J, K, L, M, N constitute the membrane sector of the complex.

Its subcellular location is the cell inner membrane. The catalysed reaction is a quinone + NADH + 5 H(+)(in) = a quinol + NAD(+) + 4 H(+)(out). NDH-1 shuttles electrons from NADH, via FMN and iron-sulfur (Fe-S) centers, to quinones in the respiratory chain. The immediate electron acceptor for the enzyme in this species is believed to be ubiquinone. Couples the redox reaction to proton translocation (for every two electrons transferred, four hydrogen ions are translocated across the cytoplasmic membrane), and thus conserves the redox energy in a proton gradient. The polypeptide is NADH-quinone oxidoreductase subunit K (Bartonella tribocorum (strain CIP 105476 / IBS 506)).